We begin with the raw amino-acid sequence, 488 residues long: Pup--protein ligase (488 aa).

Glu33 is a binding site for Mg(2+). ATP is bound at residue Arg76. A Mg(2+)-binding site is contributed by Tyr78. Asp80 serves as the catalytic Proton acceptor. Glu86 is a Mg(2+) binding site. ATP contacts are provided by Thr89 and Trp453.

It belongs to the Pup ligase/Pup deamidase family. Pup-conjugating enzyme subfamily.

The enzyme catalyses ATP + [prokaryotic ubiquitin-like protein]-L-glutamate + [protein]-L-lysine = ADP + phosphate + N(6)-([prokaryotic ubiquitin-like protein]-gamma-L-glutamyl)-[protein]-L-lysine.. Its pathway is protein degradation; proteasomal Pup-dependent pathway. It functions in the pathway protein modification; protein pupylation. Functionally, catalyzes the covalent attachment of the prokaryotic ubiquitin-like protein modifier Pup to the proteasomal substrate proteins, thereby targeting them for proteasomal degradation. This tagging system is termed pupylation. The ligation reaction involves the side-chain carboxylate of the C-terminal glutamate of Pup and the side-chain amino group of a substrate lysine. This chain is Pup--protein ligase, found in Bifidobacterium adolescentis (strain ATCC 15703 / DSM 20083 / NCTC 11814 / E194a).